Here is a 282-residue protein sequence, read N- to C-terminus: tRNA (guanine-N(1)-)-methyltransferase (282 aa).

145–150 (IGDYVL) contributes to the S-adenosyl-L-methionine binding site.

It belongs to the RNA methyltransferase TrmD family. In terms of assembly, homodimer.

The protein localises to the cytoplasm. It carries out the reaction guanosine(37) in tRNA + S-adenosyl-L-methionine = N(1)-methylguanosine(37) in tRNA + S-adenosyl-L-homocysteine + H(+). Functionally, specifically methylates guanosine-37 in various tRNAs. This Streptomyces avermitilis (strain ATCC 31267 / DSM 46492 / JCM 5070 / NBRC 14893 / NCIMB 12804 / NRRL 8165 / MA-4680) protein is tRNA (guanine-N(1)-)-methyltransferase.